The sequence spans 87 residues: MAKFNVLDHNLVPEHHIVSEEEEKTILKELGIEKEFLPRISPNDPVIKALEAIHGKIKDGTVIKIIRNSPTMGHSVYYRVVASEVFK.

Belongs to the archaeal Rpo5/eukaryotic RPB5 RNA polymerase subunit family. Part of the RNA polymerase complex.

Its subcellular location is the cytoplasm. It catalyses the reaction RNA(n) + a ribonucleoside 5'-triphosphate = RNA(n+1) + diphosphate. Functionally, DNA-dependent RNA polymerase (RNAP) catalyzes the transcription of DNA into RNA using the four ribonucleoside triphosphates as substrates. The chain is DNA-directed RNA polymerase subunit Rpo5 from Thermoplasma volcanium (strain ATCC 51530 / DSM 4299 / JCM 9571 / NBRC 15438 / GSS1).